Here is a 552-residue protein sequence, read N- to C-terminus: CTP synthase (552 aa).

The tract at residues 1–270 (MTKYVFVTGG…DRIICDELKL (270 aa)) is amidoligase domain. S13 contributes to the CTP binding site. S13 is a binding site for UTP. ATP-binding positions include 14–19 (SLGKGI) and D71. The Mg(2+) site is built by D71 and E144. CTP is bound by residues 151–153 (DIE), 191–196 (KTKPTQ), and K227. UTP is bound by residues 191-196 (KTKPTQ) and K227. The region spanning 295–547 (TIGMVGKYVD…VEAALANKQA (253 aa)) is the Glutamine amidotransferase type-1 domain. Residue G356 coordinates L-glutamine. C383 serves as the catalytic Nucleophile; for glutamine hydrolysis. Residues 384 to 387 (LGMQ), E407, and R473 each bind L-glutamine. Active-site residues include H520 and E522.

It belongs to the CTP synthase family. In terms of assembly, homotetramer.

It carries out the reaction UTP + L-glutamine + ATP + H2O = CTP + L-glutamate + ADP + phosphate + 2 H(+). The enzyme catalyses L-glutamine + H2O = L-glutamate + NH4(+). It catalyses the reaction UTP + NH4(+) + ATP = CTP + ADP + phosphate + 2 H(+). It functions in the pathway pyrimidine metabolism; CTP biosynthesis via de novo pathway; CTP from UDP: step 2/2. Allosterically activated by GTP, when glutamine is the substrate; GTP has no effect on the reaction when ammonia is the substrate. The allosteric effector GTP functions by stabilizing the protein conformation that binds the tetrahedral intermediate(s) formed during glutamine hydrolysis. Inhibited by the product CTP, via allosteric rather than competitive inhibition. Catalyzes the ATP-dependent amination of UTP to CTP with either L-glutamine or ammonia as the source of nitrogen. Regulates intracellular CTP levels through interactions with the four ribonucleotide triphosphates. The polypeptide is CTP synthase (Burkholderia vietnamiensis (strain G4 / LMG 22486) (Burkholderia cepacia (strain R1808))).